The sequence spans 188 residues: dCTP deaminase (188 aa).

K109–R114 lines the dCTP pocket. The active-site Proton donor/acceptor is E135. Residues Q154, Y168, and Q178 each coordinate dCTP.

This sequence belongs to the dCTP deaminase family. In terms of assembly, homotrimer.

The catalysed reaction is dCTP + H2O + H(+) = dUTP + NH4(+). It functions in the pathway pyrimidine metabolism; dUMP biosynthesis; dUMP from dCTP (dUTP route): step 1/2. Functionally, catalyzes the deamination of dCTP to dUTP. The chain is dCTP deaminase from Helicobacter pylori (strain G27).